The primary structure comprises 638 residues: 1-deoxy-D-xylulose-5-phosphate synthase (638 aa).

Thiamine diphosphate is bound by residues His-72 and 113–115 (GHA). A Mg(2+)-binding site is contributed by Asp-144. Thiamine diphosphate is bound by residues 145-146 (GA), Asn-174, Tyr-289, and Glu-372. Mg(2+) is bound at residue Asn-174.

Belongs to the transketolase family. DXPS subfamily. In terms of assembly, homodimer. It depends on Mg(2+) as a cofactor. Requires thiamine diphosphate as cofactor.

It catalyses the reaction D-glyceraldehyde 3-phosphate + pyruvate + H(+) = 1-deoxy-D-xylulose 5-phosphate + CO2. It participates in metabolic intermediate biosynthesis; 1-deoxy-D-xylulose 5-phosphate biosynthesis; 1-deoxy-D-xylulose 5-phosphate from D-glyceraldehyde 3-phosphate and pyruvate: step 1/1. In terms of biological role, catalyzes the acyloin condensation reaction between C atoms 2 and 3 of pyruvate and glyceraldehyde 3-phosphate to yield 1-deoxy-D-xylulose-5-phosphate (DXP). The polypeptide is 1-deoxy-D-xylulose-5-phosphate synthase (Gloeobacter violaceus (strain ATCC 29082 / PCC 7421)).